The primary structure comprises 355 residues: 3-isopropylmalate dehydrogenase (355 aa).

The substrate site is built by Arg90, Arg100, Arg128, and Asp222. Mg(2+) is bound by residues Asp222, Asp246, and Asp250. Residue 280-292 (GSAPDIAGKGVAN) participates in NAD(+) binding.

This sequence belongs to the isocitrate and isopropylmalate dehydrogenases family. LeuB type 1 subfamily. In terms of assembly, homodimer. Mg(2+) serves as cofactor. Requires Mn(2+) as cofactor.

It is found in the cytoplasm. It catalyses the reaction (2R,3S)-3-isopropylmalate + NAD(+) = 4-methyl-2-oxopentanoate + CO2 + NADH. It participates in amino-acid biosynthesis; L-leucine biosynthesis; L-leucine from 3-methyl-2-oxobutanoate: step 3/4. Catalyzes the oxidation of 3-carboxy-2-hydroxy-4-methylpentanoate (3-isopropylmalate) to 3-carboxy-4-methyl-2-oxopentanoate. The product decarboxylates to 4-methyl-2 oxopentanoate. The sequence is that of 3-isopropylmalate dehydrogenase from Cupriavidus metallidurans (strain ATCC 43123 / DSM 2839 / NBRC 102507 / CH34) (Ralstonia metallidurans).